Reading from the N-terminus, the 442-residue chain is MKSEINIFALATAPFNSALHIIRFSGPDVYEILNKITNKKITRKGMQIQRTWIVDENNKRIDDVLLFKFVSPNSYTGEDLIEISCHGNMLIVNEICALLLKKGGVYAKPGEFTQRSFLNGKMSLQQASAVNKLILSPNLLVKDIVLNNLAGEMDQQLEQIAQQVNQLVMQMEVNIDYPEYLDEQVELSTLNNKVKLIIEKLKRIIENSKQLKKLHDPFKIAIIGETNVGKSSLLNALLNQDKAIVSNIKGSTRDVVEGDFNLNGYLIKILDTAGIRKHKSGLEKAGIKKSFESIKQANLVIYLLDATHPKKDLELISFFKKNKKDFFVFYNKKDLITNKFENSISAKQKDIKELVDLLTKYINEFYKKIDQKIYLIENWQQILIEKIKEQLEQFLKQQKKYLFFDVLVTHLREAQQDILKLLGKDVGFDLVNEIFNNFCLGK.

Residues R23, E82, and K121 each contribute to the (6S)-5-formyl-5,6,7,8-tetrahydrofolate site. Positions 217–363 constitute a TrmE-type G domain; it reads PFKIAIIGET…LVDLLTKYIN (147 aa). A K(+)-binding site is contributed by N227. Residues 227-232, 246-252, and 271-274 contribute to the GTP site; these read NVGKSS, SNIKGST, and DTAG. S231 is a binding site for Mg(2+). Residues S246, I248, and S251 each contribute to the K(+) site. T252 contributes to the Mg(2+) binding site. K442 contacts (6S)-5-formyl-5,6,7,8-tetrahydrofolate.

Belongs to the TRAFAC class TrmE-Era-EngA-EngB-Septin-like GTPase superfamily. TrmE GTPase family. Homodimer. Heterotetramer of two MnmE and two MnmG subunits. It depends on K(+) as a cofactor.

The protein resides in the cytoplasm. Functionally, exhibits a very high intrinsic GTPase hydrolysis rate. Involved in the addition of a carboxymethylaminomethyl (cmnm) group at the wobble position (U34) of certain tRNAs, forming tRNA-cmnm(5)s(2)U34. This is tRNA modification GTPase MnmE from Mycoplasma genitalium (strain ATCC 33530 / DSM 19775 / NCTC 10195 / G37) (Mycoplasmoides genitalium).